Consider the following 107-residue polypeptide: Cytochrome c-550 (107 aa).

The heme c site is built by Cys-11, Cys-14, His-15, and Met-80.

Post-translationally, binds 1 heme c group covalently per subunit.

This is Cytochrome c-550 from Ancylobacter novellus (Thiobacillus novellus).